Consider the following 542-residue polypeptide: ABC transport system permease protein p69 (542 aa).

Helical transmembrane passes span 23–43 (ALAIIVLVVIIYSFIDNFSGF), 77–97 (IFYVVSGSILGFVIALWFSYL), 114–134 (FTIFLRSFPVLVFAFLFNNLF), 140–160 (ATLTITWFSWLWSTKYITAFF), 212–232 (LSIAGITGIGELIATPLGGTV), 236–256 (LVLIPMLTLIGFLLFLEASVF), 287–307 (VMIYILALVLAAFTLANLVQL), 350–370 (TQAISLITLVFVLALLFGFLA), 386–406 (LLVIRVIPSVLLFRLFDPIIF), 412–432 (IIFVLAIHSAASYGQLITINF), 481–501 (LVVFGIFGGSIIGGRINNFFE), and 509–529 (GTITLPLMVYLMVFEVILMAV). The ABC transmembrane type-1 domain maps to 349-526 (TTQAISLITL…VYLMVFEVIL (178 aa)).

The protein belongs to the binding-protein-dependent transport system permease family.

It is found in the cell membrane. Probably part of a high-affinity transport system. The chain is ABC transport system permease protein p69 (p69) from Mycoplasma pneumoniae (strain ATCC 29342 / M129 / Subtype 1) (Mycoplasmoides pneumoniae).